We begin with the raw amino-acid sequence, 239 residues long: 4-hydroxy-tetrahydrodipicolinate reductase (239 aa).

NAD(+)-binding positions include 12–17 (GASGRM), 94–96 (GTT), and 118–121 (ASNF). H150 serves as the catalytic Proton donor/acceptor. H151 provides a ligand contact to (S)-2,3,4,5-tetrahydrodipicolinate. Residue K154 is the Proton donor of the active site. 160-161 (GT) serves as a coordination point for (S)-2,3,4,5-tetrahydrodipicolinate.

The protein belongs to the DapB family.

The protein localises to the cytoplasm. The enzyme catalyses (S)-2,3,4,5-tetrahydrodipicolinate + NAD(+) + H2O = (2S,4S)-4-hydroxy-2,3,4,5-tetrahydrodipicolinate + NADH + H(+). It catalyses the reaction (S)-2,3,4,5-tetrahydrodipicolinate + NADP(+) + H2O = (2S,4S)-4-hydroxy-2,3,4,5-tetrahydrodipicolinate + NADPH + H(+). It participates in amino-acid biosynthesis; L-lysine biosynthesis via DAP pathway; (S)-tetrahydrodipicolinate from L-aspartate: step 4/4. Functionally, catalyzes the conversion of 4-hydroxy-tetrahydrodipicolinate (HTPA) to tetrahydrodipicolinate. The sequence is that of 4-hydroxy-tetrahydrodipicolinate reductase from Stenotrophomonas maltophilia (strain R551-3).